Here is a 392-residue protein sequence, read N- to C-terminus: Aminomethyltransferase, mitochondrial (392 aa).

The N-terminal 16 residues, 1-16 (MLRAGCRAALARRHLS), are a transit peptide targeting the mitochondrion. Positions 221, 250, and 388 each coordinate substrate.

The protein belongs to the GcvT family. As to quaternary structure, the glycine cleavage system is composed of four proteins: P, T, L and H.

The protein localises to the mitochondrion. It catalyses the reaction N(6)-[(R)-S(8)-aminomethyldihydrolipoyl]-L-lysyl-[protein] + (6S)-5,6,7,8-tetrahydrofolate = N(6)-[(R)-dihydrolipoyl]-L-lysyl-[protein] + (6R)-5,10-methylene-5,6,7,8-tetrahydrofolate + NH4(+). Functionally, the glycine cleavage system catalyzes the degradation of glycine. The chain is Aminomethyltransferase, mitochondrial from Gallus gallus (Chicken).